Here is a 445-residue protein sequence, read N- to C-terminus: MSAKWEKKGTNDGELTFEIDLPQIQQGLDQAFQRVRKNLTVPGFRKGKVSRTVFKRMYGDAALYEDALNILLPDAYEAAVKESGIDPVDQPQINVDSMDEGKPWVIKATVTVKPEVTLGQYKGLEVPKQNVEVSAKDIDAELEKRREQQAELVVKDDKAAENGDTVVIDYVGTIDGTEFDGGSSKNYSLELGSNSFIPGFEEQLVGHKSGDEVTVNVTFPEDYKAADLAGKAAEFKTTIHEVKVKELPALDDDFAKDLDDDVDTLDELKAKIKKELTDQREEAAKNAVQEAAIKEATDNATIKEVPNAMIEQEVHNQMDQYLGNMQRQGISPKMYYQLTGTSEDDLHKQFEADAATRVRTNLVLEAIVKAEDIQPTEDQVNEEVKNLASEYNMDEKAVRKALSEDMLKHDIGVKQAIDIITDSAKEVESAKDDADKEASDAKADK.

The 86-residue stretch at 163–248 (GDTVVIDYVG…IHEVKVKELP (86 aa)) folds into the PPIase FKBP-type domain. Residues 425 to 445 (KEVESAKDDADKEASDAKADK) form a disordered region.

The protein belongs to the FKBP-type PPIase family. Tig subfamily.

The protein resides in the cytoplasm. It carries out the reaction [protein]-peptidylproline (omega=180) = [protein]-peptidylproline (omega=0). Involved in protein export. Acts as a chaperone by maintaining the newly synthesized protein in an open conformation. Functions as a peptidyl-prolyl cis-trans isomerase. The chain is Trigger factor from Lacticaseibacillus casei (strain BL23) (Lactobacillus casei).